The sequence spans 723 residues: Zinc finger CCCH domain-containing protein 11A (723 aa).

3 consecutive C3H1-type zinc fingers follow at residues 2–29, 31–57, and 60–87; these read SKQG…HCEA, LGNE…HMEI, and KRSE…HTKG. Disordered regions lie at residues 142 to 208, 223 to 256, 404 to 428, 450 to 526, and 565 to 681; these read ENSE…KQDD, KKQK…EKEN, KRAE…KLEE, EKAL…VKSL, and VKPS…APLS. Residues 160–175 are compositionally biased toward acidic residues; sequence ADDDEDDDDQLSEEGE. Positions 376-411 form a coiled coil; that stretch reads KTFSEALAERKQRRLEEEKQKLEEFLTEKRAEGERK. The segment covering 511 to 522 has biased composition (polar residues); the sequence is PSNQSAPNSKAQ. The span at 609 to 620 shows a compositional bias: low complexity; the sequence is KKAALTAAPALP. Polar residues predominate over residues 637–649; it reads LELQLGSQADSVE. A compositionally biased stretch (low complexity) spans 650–672; sequence QSGDSSSASASSQSVAKAQQLSS.

Its subcellular location is the nucleus speckle. Through its association with TREX complex components, may participate in the export and post-transcriptional coordination of selected mRNA transcripts. Binds RNA. The polypeptide is Zinc finger CCCH domain-containing protein 11A (ZC3H11A) (Gallus gallus (Chicken)).